A 223-amino-acid polypeptide reads, in one-letter code: 7-cyano-7-deazaguanine synthase (223 aa).

Position 8–18 (8–18) interacts with ATP; that stretch reads MSGGMDSTLCA. Zn(2+) contacts are provided by Cys-187, Cys-195, Cys-198, and Cys-201.

Belongs to the QueC family. The cofactor is Zn(2+).

The catalysed reaction is 7-carboxy-7-deazaguanine + NH4(+) + ATP = 7-cyano-7-deazaguanine + ADP + phosphate + H2O + H(+). It functions in the pathway purine metabolism; 7-cyano-7-deazaguanine biosynthesis. Functionally, catalyzes the ATP-dependent conversion of 7-carboxy-7-deazaguanine (CDG) to 7-cyano-7-deazaguanine (preQ(0)). The chain is 7-cyano-7-deazaguanine synthase from Campylobacter curvus (strain 525.92).